The following is a 1169-amino-acid chain: RecBCD enzyme subunit RecB (1169 aa).

Positions 1 to 436 (MNKILEKIQN…IVLKINHRSS (436 aa)) constitute a UvrD-like helicase ATP-binding domain. A DNA-binding and helicase activity, interacts with RecC region spans residues 1 to 839 (MNKILEKIQN…LLEIAKIFTI (839 aa)). 18–25 (ASAGTGKT) serves as a coordination point for ATP. The UvrD-like helicase C-terminal domain maps to 459–746 (IEKIDFTNSL…ELMTIHKSKG (288 aa)). Residues 883 to 1169 (KEYTSSFSSL…ILELGIKRHL (287 aa)) are nuclease activity, interacts with RecD and RecA. Mg(2+)-binding residues include histidine 939, aspartate 1052, and aspartate 1065. Residue aspartate 1065 is the For nuclease activity of the active site.

Belongs to the helicase family. UvrD subfamily. In terms of assembly, heterotrimer of RecB, RecC and RecD. All subunits contribute to DNA-binding. Interacts with RecA. The cofactor is Mg(2+).

It catalyses the reaction Exonucleolytic cleavage (in the presence of ATP) in either 5'- to 3'- or 3'- to 5'-direction to yield 5'-phosphooligonucleotides.. The enzyme catalyses Couples ATP hydrolysis with the unwinding of duplex DNA by translocating in the 3'-5' direction.. The catalysed reaction is ATP + H2O = ADP + phosphate + H(+). In terms of biological role, a helicase/nuclease that prepares dsDNA breaks (DSB) for recombinational DNA repair. Binds to DSBs and unwinds DNA via a highly rapid and processive ATP-dependent bidirectional helicase activity. Unwinds dsDNA until it encounters a Chi (crossover hotspot instigator) sequence from the 3' direction. Cuts ssDNA a few nucleotides 3' to the Chi site. The properties and activities of the enzyme are changed at Chi. The Chi-altered holoenzyme produces a long 3'-ssDNA overhang and facilitates RecA-binding to the ssDNA for homologous DNA recombination and repair. Holoenzyme degrades any linearized DNA that is unable to undergo homologous recombination. In the holoenzyme this subunit contributes ATPase, 3'-5' helicase, exonuclease activity and loads RecA onto ssDNA. In Borreliella burgdorferi (strain ATCC 35210 / DSM 4680 / CIP 102532 / B31) (Borrelia burgdorferi), this protein is RecBCD enzyme subunit RecB.